Here is a 593-residue protein sequence, read N- to C-terminus: Myc box-dependent-interacting protein 1 (593 aa).

A2 carries the N-acetylalanine modification. An interaction with BIN2 region spans residues 2–122; sequence AEMGSKGVTA…DYHQKLVDQA (121 aa). 2 coiled-coil regions span residues 15–42 and 193–267; these read ASNV…TKDE and HLVA…NDVL. In terms of domain architecture, BAR spans 29–276; the sequence is VLQKLGKADE…LVGLEKQHGS (248 aa). Disordered stretches follow at residues 280-354 and 400-488; these read TVKA…KEVK and PVTS…AASS. S296, S298, and S303 each carry phosphoserine. A phosphothreonine mark is found at T307 and T323. Phosphoserine is present on S331. The segment at 378–421 is clathrin-binding; the sequence is FEAPGPFSEQASLLDLDFDPLPPVTSPVKAPTPSGQSIPWDLWE. The 74-residue stretch at 520 to 593 folds into the SH3 domain; sequence GFMFKVQAQH…FPENFTERVP (74 aa).

As to quaternary structure, heterodimer with AMPH. Binds SH3GLB1. Interacts (via SH3 domain) with DNM1. Interacts with SYNJ1. Interacts (via SH3 domain) with DNM2. Isoform IIA interacts with CLTC. Isoform IIB does not interact with CLTC. Isoform IIC1 does not interact with CLTC. Isoform IIC2 does not interact with CLTC. Interacts with AP2A2. Interacts with AP2B1. Interacts with MYC (via N-terminal transactivation domain); the interaction requires the integrity of the conserved MYC box regions 1 and 2. Interacts with BIN2. Interacts with SNX4. Interacts (via BAR domain) with BACE1. Binds (via BAR domain) F-actin. In terms of assembly, (Microbial infection) Interacts (SH3 domain) with HCV NS5A. In terms of processing, phosphorylated by protein kinase C. Ubiquitous. Highest expression in the brain and muscle. Expressed in oligodendrocytes. Isoform IIA is expressed only in the brain, where it is detected in the gray matter, but not in the white matter. Isoform BIN1 is widely expressed with highest expression in skeletal muscle.

It is found in the nucleus. It localises to the cytoplasm. The protein localises to the endosome. Its subcellular location is the cell membrane. The protein resides in the sarcolemma. It is found in the T-tubule. Its function is as follows. Is a key player in the control of plasma membrane curvature, membrane shaping and membrane remodeling. Required in muscle cells for the formation of T-tubules, tubular invaginations of the plasma membrane that function in depolarization-contraction coupling. Is a negative regulator of endocytosis. Is also involved in the regulation of intracellular vesicles sorting, modulation of BACE1 trafficking and the control of amyloid-beta production. In neuronal circuits, endocytosis regulation may influence the internalization of PHF-tau aggregates. May be involved in the regulation of MYC activity and the control cell proliferation. Has actin bundling activity and stabilizes actin filaments against depolymerization in vitro. The polypeptide is Myc box-dependent-interacting protein 1 (BIN1) (Homo sapiens (Human)).